We begin with the raw amino-acid sequence, 488 residues long: U3 small nucleolar RNA-associated protein 6 (488 aa).

4 HAT repeats span residues 31–63 (NNIIKTRRVFEEKLARRQVKLNDFLSYIQYEIN), 87–119 (AGPRKVLFLFLRATNKFFGDVTLWLDYIHYAQK), 121–153 (KAVNIVGKICVAALQKHPNNAELWVVACDHEFS), and 156–188 (ANVSAARALMNRALRLNQENPVIWAAYFRLELS).

It belongs to the UTP6 family. Component of the ribosomal small subunit (SSU) processome, composed of the 35S pre-rRNA precursor, the U3 snoRNA, and at least 40 protein subunits. Interacts with U3 snoRNA.

The protein resides in the nucleus. The protein localises to the nucleolus. In terms of biological role, component of the SSU processome, a pre-ribosomal particle required for the maturation of the 18S rRNA from the 35S pre-rRNA precursor. This is U3 small nucleolar RNA-associated protein 6 (utp6) from Schizosaccharomyces pombe (strain 972 / ATCC 24843) (Fission yeast).